Consider the following 218-residue polypeptide: MSDNDELQQIAHLRREYTKGGLRRRDLPADPLTLFERWLSQACEAKLADPTAMVVATVDEHGQPYQRIVLLKHYDEKGMVFYTNLGSRKAHQIENNPRVSLLFPWHTLERQVMVIGKAERLSTLEVMKYFHSRPRDSQIGAWVSKQSSRISARGILESKFLELKQKFQQGEVPLPSFWGGFRVSLEQIEFWQGGEHRLHDRFLYQRENDAWKIDRLAP.

Residues 14–17 (RREY) and K72 contribute to the substrate site. Residues 67–72 (RIVLLK), 82–83 (YT), R88, K89, and Q111 each bind FMN. Residues Y129, R133, and S137 each coordinate substrate. Residues 146-147 (QS) and W191 each bind FMN. 197-199 (RLH) serves as a coordination point for substrate. R201 serves as a coordination point for FMN.

The protein belongs to the pyridoxamine 5'-phosphate oxidase family. Homodimer. Requires FMN as cofactor.

It carries out the reaction pyridoxamine 5'-phosphate + O2 + H2O = pyridoxal 5'-phosphate + H2O2 + NH4(+). The enzyme catalyses pyridoxine 5'-phosphate + O2 = pyridoxal 5'-phosphate + H2O2. The protein operates within cofactor metabolism; pyridoxal 5'-phosphate salvage; pyridoxal 5'-phosphate from pyridoxamine 5'-phosphate: step 1/1. Its pathway is cofactor metabolism; pyridoxal 5'-phosphate salvage; pyridoxal 5'-phosphate from pyridoxine 5'-phosphate: step 1/1. In terms of biological role, catalyzes the oxidation of either pyridoxine 5'-phosphate (PNP) or pyridoxamine 5'-phosphate (PMP) into pyridoxal 5'-phosphate (PLP). The protein is Pyridoxine/pyridoxamine 5'-phosphate oxidase of Escherichia coli O127:H6 (strain E2348/69 / EPEC).